The primary structure comprises 319 residues: Acetyl-coenzyme A carboxylase carboxyl transferase subunit alpha (319 aa).

Residues 39–293 (RLQKKSNDLT…KAVLEKQLHE (255 aa)) enclose the CoA carboxyltransferase C-terminal domain.

This sequence belongs to the AccA family. In terms of assembly, acetyl-CoA carboxylase is a heterohexamer composed of biotin carboxyl carrier protein (AccB), biotin carboxylase (AccC) and two subunits each of ACCase subunit alpha (AccA) and ACCase subunit beta (AccD).

Its subcellular location is the cytoplasm. It catalyses the reaction N(6)-carboxybiotinyl-L-lysyl-[protein] + acetyl-CoA = N(6)-biotinyl-L-lysyl-[protein] + malonyl-CoA. It functions in the pathway lipid metabolism; malonyl-CoA biosynthesis; malonyl-CoA from acetyl-CoA: step 1/1. In terms of biological role, component of the acetyl coenzyme A carboxylase (ACC) complex. First, biotin carboxylase catalyzes the carboxylation of biotin on its carrier protein (BCCP) and then the CO(2) group is transferred by the carboxyltransferase to acetyl-CoA to form malonyl-CoA. This Neisseria gonorrhoeae (strain ATCC 700825 / FA 1090) protein is Acetyl-coenzyme A carboxylase carboxyl transferase subunit alpha.